The sequence spans 407 residues: Multifunctional CCA protein (407 aa).

ATP is bound by residues Gly-8 and Arg-11. Gly-8 and Arg-11 together coordinate CTP. Residues Asp-21 and Asp-23 each coordinate Mg(2+). Residues Arg-91, Arg-137, and Arg-140 each contribute to the ATP site. CTP-binding residues include Arg-91, Arg-137, and Arg-140. An HD domain is found at 228 to 329 (TGIHTLLVAE…VKIFNKLDVW (102 aa)).

This sequence belongs to the tRNA nucleotidyltransferase/poly(A) polymerase family. Bacterial CCA-adding enzyme type 1 subfamily. Monomer. Can also form homodimers and oligomers. Requires Mg(2+) as cofactor. The cofactor is Ni(2+).

It carries out the reaction a tRNA precursor + 2 CTP + ATP = a tRNA with a 3' CCA end + 3 diphosphate. The catalysed reaction is a tRNA with a 3' CCA end + 2 CTP + ATP = a tRNA with a 3' CCACCA end + 3 diphosphate. Functionally, catalyzes the addition and repair of the essential 3'-terminal CCA sequence in tRNAs without using a nucleic acid template. Adds these three nucleotides in the order of C, C, and A to the tRNA nucleotide-73, using CTP and ATP as substrates and producing inorganic pyrophosphate. tRNA 3'-terminal CCA addition is required both for tRNA processing and repair. Also involved in tRNA surveillance by mediating tandem CCA addition to generate a CCACCA at the 3' terminus of unstable tRNAs. While stable tRNAs receive only 3'-terminal CCA, unstable tRNAs are marked with CCACCA and rapidly degraded. This is Multifunctional CCA protein from Vibrio vulnificus (strain YJ016).